A 479-amino-acid chain; its full sequence is Outer membrane protein OprJ (479 aa).

The N-terminal stretch at 1–19 (MRKPAFGVSALLIALTLGA) is a signal peptide. Cys20 is lipidated: N-palmitoyl cysteine. The S-diacylglycerol cysteine moiety is linked to residue Cys20. The tract at residues 102 to 121 (LNAAATGNRQRQPADLSAGN) is disordered.

This sequence belongs to the outer membrane factor (OMF) (TC 1.B.17) family.

Its subcellular location is the cell outer membrane. In terms of biological role, channel-forming component of a multidrug resistance efflux pump. The protein is Outer membrane protein OprJ (oprJ) of Pseudomonas aeruginosa (strain ATCC 15692 / DSM 22644 / CIP 104116 / JCM 14847 / LMG 12228 / 1C / PRS 101 / PAO1).